A 1031-amino-acid chain; its full sequence is Putative glycine dehydrogenase (decarboxylating), mitochondrial (1031 aa).

The transit peptide at 1–49 directs the protein to the mitochondrion; that stretch reads MFDSFMKRNQLALIMFRACSKLQYHGVNTSLSRHLFLAKRNLSISSACL. An N6-(pyridoxal phosphate)lysine modification is found at lysine 783.

It belongs to the GcvP family. Requires pyridoxal 5'-phosphate as cofactor.

Its subcellular location is the mitochondrion. The enzyme catalyses N(6)-[(R)-lipoyl]-L-lysyl-[glycine-cleavage complex H protein] + glycine + H(+) = N(6)-[(R)-S(8)-aminomethyldihydrolipoyl]-L-lysyl-[glycine-cleavage complex H protein] + CO2. Functionally, the glycine cleavage system catalyzes the degradation of glycine. The P protein binds the alpha-amino group of glycine through its pyridoxal phosphate cofactor; CO(2) is released and the remaining methylamine moiety is then transferred to the lipoamide cofactor of the H protein. The chain is Putative glycine dehydrogenase (decarboxylating), mitochondrial (gcv2) from Schizosaccharomyces pombe (strain 972 / ATCC 24843) (Fission yeast).